A 534-amino-acid chain; its full sequence is MKRSSLVDSCSYSRIFRSIFCLLSFCIFFLTTTNAQVMHRRLWPWPLWPRPYPQPWPMNPPTPDPSPKPVAPPGPSSKPVAPPGPSPCPSPPPKPQPKPPPAPSPSPCPSPPPKPQPKPVPPPACPPTPPKPQPKPAPPPEPKPAPPPAPKPVPCPSPPKPPAPTPKPVPPHGPPPKPAPAPTPAPSPKPAPSPPKPENKTIPAVFFFGDSVFDTGNNNNLETKIKSNYRPYGMDFKFRVATGRFSNGMVASDYLAKYMGVKEIVPAYLDPKIQPNDLLTGVSFASGGAGYNPTTSEAANAIPMLDQLTYFQDYIEKVNRLVRQEKSQYKLAGLEKTNQLISKGVAIVVGGSNDLIITYFGSGAQRLKNDIDSYTTIIADSAASFVLQLYGYGARRIGVIGTPPLGCVPSQRLKKKKICNEELNYASQLFNSKLLLILGQLSKTLPNSTFVYMDIYTIISQMLETPAAYGFEETKKPCCKTGLLSAGALCKKSTSKICPNTSSYLFWDGVHPTQRAYKTINKVLIKEYLHVLSK.

Positions 1-35 (MKRSSLVDSCSYSRIFRSIFCLLSFCIFFLTTTNA) are cleaved as a signal peptide. A compositionally biased stretch (pro residues) spans 59–196 (NPPTPDPSPK…SPKPAPSPPK (138 aa)). Positions 59-202 (NPPTPDPSPK…SPPKPENKTI (144 aa)) are disordered. Catalysis depends on Ser-211, which acts as the Nucleophile. Catalysis depends on residues Asp-508 and His-511.

The protein belongs to the 'GDSL' lipolytic enzyme family. In terms of tissue distribution, found in sporophytic and gametophytic cell types in the anther, only in male fertile plants.

In Arabidopsis thaliana (Mouse-ear cress), this protein is Anther-specific proline-rich protein APG (APG).